We begin with the raw amino-acid sequence, 322 residues long: Major serine/threonine-protein phosphatase PP2A-2 catalytic subunit (322 aa).

Residues aspartate 70, histidine 72, aspartate 98, and asparagine 130 each contribute to the Mn(2+) site. Residue histidine 131 is the Proton donor of the active site. Residues histidine 180 and histidine 254 each coordinate Mn(2+). The residue at position 322 (leucine 322) is a Leucine methyl ester.

This sequence belongs to the PPP phosphatase family. PP-2A subfamily. It depends on Mn(2+) as a cofactor.

The enzyme catalyses O-phospho-L-seryl-[protein] + H2O = L-seryl-[protein] + phosphate. It carries out the reaction O-phospho-L-threonyl-[protein] + H2O = L-threonyl-[protein] + phosphate. In terms of biological role, essential role in cell cycle control. PP2A may be involved in controlling the entry into mitosis, possibly acting as an inhibitor. The polypeptide is Major serine/threonine-protein phosphatase PP2A-2 catalytic subunit (ppa2) (Schizosaccharomyces pombe (strain 972 / ATCC 24843) (Fission yeast)).